A 130-amino-acid polypeptide reads, in one-letter code: Small ribosomal subunit protein uS9 (130 aa).

Belongs to the universal ribosomal protein uS9 family.

In Chromobacterium violaceum (strain ATCC 12472 / DSM 30191 / JCM 1249 / CCUG 213 / NBRC 12614 / NCIMB 9131 / NCTC 9757 / MK), this protein is Small ribosomal subunit protein uS9.